The sequence spans 351 residues: MVPMDRLLQIVRRFEFLEARLSAGAAPAEIAALSREYAELKPVVAEIAAYRTALEDLAEAEAMLADPEMRALAEDELPRLRARIPEMEQALRLALLPRDAADARPAILEIRPGTGGEEAALFAGDLLRMYQRYAEAQGWRFELLDLAPSELGGIREATARIEGEGAFARLKYESGVHRVQRVPETEAQGRIHTSAATVAVLPEAEEVDIAIPAADIRIDTMRSSGAGGQHVNTTDSAVRITHLPTGIVVTSSEKSQHRNREIAMQVLRARLYDLERQRLAEARSADRKAQVGSGDRSERIRTYNFPQGRMTDHRINLTLYALPQIMAGDLAEVIAALTAHDQAARLAEMEA.

Gln229 carries the N5-methylglutamine modification.

This sequence belongs to the prokaryotic/mitochondrial release factor family. Post-translationally, methylated by PrmC. Methylation increases the termination efficiency of RF1.

Its subcellular location is the cytoplasm. In terms of biological role, peptide chain release factor 1 directs the termination of translation in response to the peptide chain termination codons UAG and UAA. The chain is Peptide chain release factor 1 from Cereibacter sphaeroides (strain ATCC 17025 / ATH 2.4.3) (Rhodobacter sphaeroides).